A 192-amino-acid polypeptide reads, in one-letter code: Ion-translocating oxidoreductase complex subunit A (192 aa).

Transmembrane regions (helical) follow at residues 5-25 (LLLL…FLGL), 39-59 (IGMS…SYLV), 65-85 (LPFD…AVVV), 102-122 (ALGI…VALL), 134-154 (AIYG…FSAM), and 171-191 (AIAM…TGLV).

The protein belongs to the NqrDE/RnfAE family. In terms of assembly, the complex is composed of six subunits: RnfA, RnfB, RnfC, RnfD, RnfE and RnfG.

It is found in the cell inner membrane. Functionally, part of a membrane-bound complex that couples electron transfer with translocation of ions across the membrane. This chain is Ion-translocating oxidoreductase complex subunit A, found in Shewanella sp. (strain ANA-3).